The sequence spans 433 residues: Glutamate-1-semialdehyde 2,1-aminomutase (433 aa).

At Lys-269 the chain carries N6-(pyridoxal phosphate)lysine.

The protein belongs to the class-III pyridoxal-phosphate-dependent aminotransferase family. HemL subfamily. In terms of assembly, homodimer. Requires pyridoxal 5'-phosphate as cofactor.

It localises to the cytoplasm. It carries out the reaction (S)-4-amino-5-oxopentanoate = 5-aminolevulinate. It participates in porphyrin-containing compound metabolism; protoporphyrin-IX biosynthesis; 5-aminolevulinate from L-glutamyl-tRNA(Glu): step 2/2. The chain is Glutamate-1-semialdehyde 2,1-aminomutase from Renibacterium salmoninarum (strain ATCC 33209 / DSM 20767 / JCM 11484 / NBRC 15589 / NCIMB 2235).